We begin with the raw amino-acid sequence, 188 residues long: MSIKSDKWIRRMAEQHGMIEPFEPGQVRESDGRKIVSYGTSSYGYDIRCADEFKIFTNINSTIVDPKNFDEKSFVDFKGDVCIIPPNSFALARTMEYFRIPRSVLTICLGKSTYARCGIIVNVTPFEPEWEGYVTLEFSNTTPLPAKIYAGEGCAQVLFFESDEICETSYADRGGKYQGQQGVTLPKT.

Residues 111–116, 135–137, Gln156, Tyr170, and Gln180 each bind dCTP; these read KSTYAR and TLE. The Proton donor/acceptor role is filled by Glu137.

This sequence belongs to the dCTP deaminase family. In terms of assembly, homotrimer.

The catalysed reaction is dCTP + H2O + H(+) = dUTP + NH4(+). It functions in the pathway pyrimidine metabolism; dUMP biosynthesis; dUMP from dCTP (dUTP route): step 1/2. Catalyzes the deamination of dCTP to dUTP. This chain is dCTP deaminase, found in Cupriavidus metallidurans (strain ATCC 43123 / DSM 2839 / NBRC 102507 / CH34) (Ralstonia metallidurans).